The chain runs to 205 residues: CASP-like protein 2A1 (205 aa).

The Cytoplasmic portion of the chain corresponds to M1 to T35. Residues V36 to L56 form a helical membrane-spanning segment. Over K57–Y77 the chain is Extracellular. The helical transmembrane segment at L78–M98 threads the bilayer. The Cytoplasmic portion of the chain corresponds to P99 to R106. The helical transmembrane segment at A107–V127 threads the bilayer. Residues S128–K157 are Extracellular-facing. Residues T158–I178 form a helical membrane-spanning segment. Over S179–S205 the chain is Cytoplasmic.

It belongs to the Casparian strip membrane proteins (CASP) family. As to quaternary structure, homodimer and heterodimers.

It is found in the cell membrane. The polypeptide is CASP-like protein 2A1 (Vitis vinifera (Grape)).